Consider the following 209-residue polypeptide: Translation initiation factor IF-3 (209 aa).

It belongs to the IF-3 family. Monomer.

The protein localises to the cytoplasm. Its function is as follows. IF-3 binds to the 30S ribosomal subunit and shifts the equilibrium between 70S ribosomes and their 50S and 30S subunits in favor of the free subunits, thus enhancing the availability of 30S subunits on which protein synthesis initiation begins. This is Translation initiation factor IF-3 from Chlorobium phaeobacteroides (strain DSM 266 / SMG 266 / 2430).